The primary structure comprises 157 residues: Transcription elongation factor GreA (157 aa).

Residues 10–76 adopt a coiled-coil conformation; sequence THEGKQKLEQ…TLENMIRNAK (67 aa).

The protein belongs to the GreA/GreB family.

Necessary for efficient RNA polymerase transcription elongation past template-encoded arresting sites. The arresting sites in DNA have the property of trapping a certain fraction of elongating RNA polymerases that pass through, resulting in locked ternary complexes. Cleavage of the nascent transcript by cleavage factors such as GreA or GreB allows the resumption of elongation from the new 3'terminus. GreA releases sequences of 2 to 3 nucleotides. This chain is Transcription elongation factor GreA, found in Bacillus velezensis (strain DSM 23117 / BGSC 10A6 / LMG 26770 / FZB42) (Bacillus amyloliquefaciens subsp. plantarum).